The chain runs to 475 residues: MSSGKVLQVIGPVVDVEFPLDEKLPEINDALKIKESDGKTLTTEVALELGDGVVRTIAMDGTDGLQRGMEVENTGASISVPVGDDTLGRVFNVLGEPVDNGPKFGPDAKRMPIHRDAPKYDDLNNATEILETGIKVIDLLAPYVRGGKIGLFGGAGVGKTVLIQELIHNIAQGHNGISVFTGVGERTREGNDMYYEMKASGVLEKTAMVYGQMNEPPGARMRVALTGLTIAEYFRDVKGQDVLLFIDNIFRFTQAGSEVSALLGRIPSAVGYQPTLATEMGQLQERITSTKKGSITSIQAVYVPADDYTDPAPATTFAHLDATTNLERRLTQIGIYPAVDPLASTSTALTPEIVGKEHYEVATQVQHVLQRYHELQDIISILGMDELSDEEKTIVARARRIQNFLSQSFSVASQFTGLPGKYVPLKETIKGFKEILAGKYDDLPEEAFRLVGPIEDVVEKAKKMKAETDEDSSED.

Gly-153 to Thr-160 provides a ligand contact to ATP.

The protein belongs to the ATPase alpha/beta chains family. F-type ATPases have 2 components, CF(1) - the catalytic core - and CF(0) - the membrane proton channel. CF(1) has five subunits: alpha(3), beta(3), gamma(1), delta(1), epsilon(1). CF(0) has three main subunits: a(1), b(2) and c(9-12). The alpha and beta chains form an alternating ring which encloses part of the gamma chain. CF(1) is attached to CF(0) by a central stalk formed by the gamma and epsilon chains, while a peripheral stalk is formed by the delta and b chains.

It is found in the cell membrane. It carries out the reaction ATP + H2O + 4 H(+)(in) = ADP + phosphate + 5 H(+)(out). In terms of biological role, produces ATP from ADP in the presence of a proton gradient across the membrane. The catalytic sites are hosted primarily by the beta subunits. The sequence is that of ATP synthase subunit beta from Limosilactobacillus reuteri (strain DSM 20016) (Lactobacillus reuteri).